Here is a 454-residue protein sequence, read N- to C-terminus: UPF0210 protein BL1209 (454 aa).

The protein belongs to the UPF0210 family. As to quaternary structure, homodimer.

The chain is UPF0210 protein BL1209 from Bifidobacterium longum (strain NCC 2705).